A 122-amino-acid chain; its full sequence is MARIAGVDLPRNKRVEIGLTYIYGIGRSTSNKILKVTGIDPDTRVKDLTEAEIAKLREEVDKYQVEGDLRREIRANIKRLMDIGCYRGIRHRKNLPVRGQRTRTNARTRKGPKKTVGVRRAK.

The disordered stretch occupies residues 96–122 (PVRGQRTRTNARTRKGPKKTVGVRRAK).

The protein belongs to the universal ribosomal protein uS13 family. In terms of assembly, part of the 30S ribosomal subunit. Forms a loose heterodimer with protein S19. Forms two bridges to the 50S subunit in the 70S ribosome.

Its function is as follows. Located at the top of the head of the 30S subunit, it contacts several helices of the 16S rRNA. In the 70S ribosome it contacts the 23S rRNA (bridge B1a) and protein L5 of the 50S subunit (bridge B1b), connecting the 2 subunits; these bridges are implicated in subunit movement. Contacts the tRNAs in the A and P-sites. This is Small ribosomal subunit protein uS13 from Halothermothrix orenii (strain H 168 / OCM 544 / DSM 9562).